We begin with the raw amino-acid sequence, 430 residues long: MKVALPKGVFDIFPYITDAKHMWRHTSLWHRVEDVIHEVCDLYGFSEIRTPVFEKSEVFLHVGEQSDIVKKEMYTFLDKKGRSLTLRPEGTAPIVRSFIDNPMSQREDNKFYYILPMFRYERQQSGRYRQHHQFGVEAIGVRHPLRDAEVLSLLWNFYSAIGLQYMQIQLNFLGGSATRKRYDQVLRGYFLQHLDSLSSLSKERFNTNLLRILDSKEPEDQEIIKSAPPILEYVSDEDRKYFDEILSALSALNIPYSINSRLVRGLDYYTDVVFEAITTFGGHSYALGGGGRYDGLIAASGGVATPACGFGVGLERVIQTLLAQGNLTLPSSHKLRLIPVEPEADSFCFVWAQHLRSLGIPTEVDWTHKKLKAALKTADTEKVTFVCPIGERELLSEQLTIKNMSLRQEFSGSKQEVEQRLLYEIQNTSL.

The protein belongs to the class-II aminoacyl-tRNA synthetase family. Homodimer.

It is found in the cytoplasm. The catalysed reaction is tRNA(His) + L-histidine + ATP = L-histidyl-tRNA(His) + AMP + diphosphate + H(+). This Chlamydia caviae (strain ATCC VR-813 / DSM 19441 / 03DC25 / GPIC) (Chlamydophila caviae) protein is Histidine--tRNA ligase.